The primary structure comprises 145 residues: Large ribosomal subunit protein uL16 (145 aa).

Belongs to the universal ribosomal protein uL16 family. In terms of assembly, part of the 50S ribosomal subunit.

In terms of biological role, binds 23S rRNA and is also seen to make contacts with the A and possibly P site tRNAs. In Agathobacter rectalis (strain ATCC 33656 / DSM 3377 / JCM 17463 / KCTC 5835 / VPI 0990) (Eubacterium rectale), this protein is Large ribosomal subunit protein uL16.